Reading from the N-terminus, the 371-residue chain is Maltose/maltodextrin import ATP-binding protein MalK (371 aa).

An ABC transporter domain is found at 4-234 (VQLQNVTKAW…PADRFVAGFI (231 aa)). An ATP-binding site is contributed by 36-43 (GPSGCGKS).

The protein belongs to the ABC transporter superfamily. Maltooligosaccharide importer (TC 3.A.1.1.1) family. In terms of assembly, the complex is composed of two ATP-binding proteins (MalK), two transmembrane proteins (MalG and MalK) and a solute-binding protein (MalE).

It localises to the cell inner membrane. The enzyme catalyses D-maltose(out) + ATP + H2O = D-maltose(in) + ADP + phosphate + H(+). Part of the ABC transporter complex MalEFGK involved in maltose/maltodextrin import. Responsible for energy coupling to the transport system. In Escherichia coli O6:K15:H31 (strain 536 / UPEC), this protein is Maltose/maltodextrin import ATP-binding protein MalK.